An 850-amino-acid polypeptide reads, in one-letter code: MQHLADGPITGPSAFLFPQIPIPAERPMAQSQPEVLDLPVLPLRDVVVFPHMVIPLFVGRDKSMRALEKAMEADKRILLVAQKSAETDDPAAVDLHTVGTLAQVLQLLKLPDGTIKVLVEGLSRVTVDKVVEQDGALQGQGTEVEASDAREPREVEAIARSLMSLFEQYVKTNRKLPPELLQTLAGIDEPGRLADTIAPHIGVRLADKQRLLEITDIGERLELLVGLVDGEIDVQQLEKRIRGRVKSQMEKSQREYYLNEQMKAIQKELGDLDDVPGELEELARKIAEAGMPKPVETKAKAELNKLKQMSPMSAEAAVVRNYLDWLLGVPWKKRTKVRKDLKVAEDTLDADHYGLDKVKERILEYLAVQSRVKQMKGPILCLVGPPGVGKTSLGQSIAKATNRKFVRMSLGGIRDEAEIRGHRRTYVGSMPGRLVQNLNKVGSKNPLFLLDEIDKMSMDFRGDPSSALLEVLDPEQNNSFNDHYLEVDLDLSEVMFVATSNSLNIPGPLLDRMEVIRIPGYTEDEKLNIAMRYLVPKQIKANGLKPEEIEIGGDAIQDIVRYYTRESGVRNLEREVAKICRKVVKEIALAGPQPAAKKAVAKKGKPKALVTVNAKNLDKYLGVRRFDFGRAEEENEIGLVTGLAWTEVGGELLQVESTLVPGKGNLILTGQLGNVMKESASAALSVVRSRAERLGIDVDFLQKQDVHVHVPDGATPKDGPSAGIAMVTSLVSVLTKVPIRADVAMTGEITLRGRVSAIGGLKEKLLAALRGGIRTVLIPGENRKDLADIPANVTRDLKIVPVKWIDEVLDLALERPLTPKKAGKEKARKTAPRVAVRGKSRSTPGTRVKH.

Residues 38–232 (LPVLPLRDVV…LLVGLVDGEI (195 aa)) enclose the Lon N-terminal domain. Position 384 to 391 (384 to 391 (GPPGVGKT)) interacts with ATP. The Lon proteolytic domain maps to 634 to 815 (ENEIGLVTGL…DEVLDLALER (182 aa)). Active-site residues include S721 and K764. Positions 819–850 (PKKAGKEKARKTAPRVAVRGKSRSTPGTRVKH) are disordered. A compositionally biased stretch (basic residues) spans 821-840 (KAGKEKARKTAPRVAVRGKS). A compositionally biased stretch (polar residues) spans 841–850 (RSTPGTRVKH).

It belongs to the peptidase S16 family. As to quaternary structure, homohexamer. Organized in a ring with a central cavity.

It is found in the cytoplasm. It carries out the reaction Hydrolysis of proteins in presence of ATP.. ATP-dependent serine protease that mediates the selective degradation of mutant and abnormal proteins as well as certain short-lived regulatory proteins. Required for cellular homeostasis and for survival from DNA damage and developmental changes induced by stress. Degrades polypeptides processively to yield small peptide fragments that are 5 to 10 amino acids long. Binds to DNA in a double-stranded, site-specific manner. The sequence is that of Lon protease from Xanthomonas oryzae pv. oryzae (strain KACC10331 / KXO85).